We begin with the raw amino-acid sequence, 253 residues long: Phycoerythrobilin:ferredoxin oxidoreductase (253 aa).

It belongs to the HY2 family.

It catalyses the reaction (3Z)-phycoerythrobilin + oxidized 2[4Fe-4S]-[ferredoxin] = 15,16-dihydrobiliverdin + reduced 2[4Fe-4S]-[ferredoxin] + 2 H(+). Functionally, catalyzes the two-electron reduction of the C2 and C3(1) diene system of 15,16-dihydrobiliverdin. This chain is Phycoerythrobilin:ferredoxin oxidoreductase, found in Prochlorococcus marinus (strain MIT 9312).